Reading from the N-terminus, the 125-residue chain is UPF0251 protein DSY3441 (125 aa).

Belongs to the UPF0251 family.

This is UPF0251 protein DSY3441 from Desulfitobacterium hafniense (strain Y51).